Here is a 452-residue protein sequence, read N- to C-terminus: Acetyl-CoA decarbonylase/synthase complex subunit delta (452 aa).

This sequence belongs to the CdhD family. In terms of assembly, heterodimer of delta and gamma chains. The ACDS complex is made up of alpha, epsilon, beta, gamma and delta chains with a probable stoichiometry of (alpha(2)epsilon(2))(4)-beta(8)-(gamma(1)delta(1))(8).

Its function is as follows. Part of a complex that catalyzes the reversible cleavage of acetyl-CoA, allowing autotrophic growth from CO(2). Probably maintains the overall quaternary structure of the ACDS complex. In Archaeoglobus fulgidus (strain ATCC 49558 / DSM 4304 / JCM 9628 / NBRC 100126 / VC-16), this protein is Acetyl-CoA decarbonylase/synthase complex subunit delta.